Consider the following 153-residue polypeptide: UPF0756 membrane protein LSL_0936 (153 aa).

Transmembrane regions (helical) follow at residues 4–24 (WIFLGLILLIAYLGKNSSLLI), 26–46 (GAVVIVIKLFPFLSQKLYPVI), 51–71 (INWGVTIISVAILIPIATGQI), 86–106 (WIAVVCGILVAILSKHGVNLL), and 116–136 (LVIGTIIGVVFLKGVAAGPVI).

This sequence belongs to the UPF0756 family.

It localises to the cell membrane. The protein is UPF0756 membrane protein LSL_0936 of Ligilactobacillus salivarius (strain UCC118) (Lactobacillus salivarius).